The chain runs to 389 residues: Liposome tubulation protein MamY (389 aa).

Residues 1–31 (MAIAAIMGDVLMLMGFNKAAFGKLNSASRAA) lie on the Cytoplasmic side of the membrane. The chain crosses the membrane as a helical span at residues 32 to 52 (LIGAVIWAVLSIVYLTIFNGW). At 53 to 62 (KNLFTMLPHE) the chain is on the lumenal side. Residues 63–83 (FFIVLLSIALPIGLTVLILML) form a helical membrane-spanning segment. The Cytoplasmic portion of the chain corresponds to 84 to 389 (SRIVKSVDTL…TETAPDSGMD (306 aa)).

The protein belongs to the magnetosome MamY family.

The protein localises to the magnetosome membrane. Causes tubulation when added to magnetosome-derived liposomes, binds liposomes; may be involved in constriction of the cell inner membrane to form mature magnetosomes. Binds preferentially to cardiolipin, a component of bacterial membranes, with very poor to no binding of other tested (phospho)lipids. Addition of cardiolipin to magnetosome-derived lipids increases tubulation. May function with MamX, MamZ amd Mms6. The protein is Liposome tubulation protein MamY of Paramagnetospirillum magneticum (strain ATCC 700264 / AMB-1) (Magnetospirillum magneticum).